The sequence spans 199 residues: MARCKS-related protein (199 aa).

The interval 1-199 is disordered; that stretch reads MGSQSSKAPR…GPASASAENE (199 aa). A lipid anchor (N-myristoyl glycine) is attached at Gly-2. Phosphothreonine is present on Thr-14. The segment covering 16–26 has biased composition (low complexity); that stretch reads EEAAGASPAKA. Phosphoserine occurs at positions 22, 36, and 48. The segment covering 53 to 64 has biased composition (low complexity); sequence GADEAAGATGDA. Ser-71 bears the Phosphoserine mark. Over residues 74 to 85 the composition is skewed to basic and acidic residues; that stretch reads AEAKGEVAPKET. At Thr-85 the chain carries Phosphothreonine. Residues 86–98 are compositionally biased toward basic residues; the sequence is PKKKKKFSFKKPF. The effector domain involved in lipid-binding and calmodulin-binding stretch occupies residues 87-110; sequence KKKKKFSFKKPFKLSGLSFKRNRK. Phosphoserine; by PKC is present on residues Ser-93, Ser-101, and Ser-104. The residue at position 119 (Ser-119) is a Phosphoserine. Position 120 is a phosphoserine; by MAPK8 (Ser-120). 2 positions are modified to phosphoserine: Ser-132 and Ser-135. Thr-148 is modified (phosphothreonine; by MAPK8). Phosphoserine is present on residues Ser-151, Ser-162, and Ser-165. Over residues 175–199 the composition is skewed to low complexity; that stretch reads GPQAAEPSTPSGPESGPASASAENE. At Thr-183 the chain carries Phosphothreonine; by MAPK8.

This sequence belongs to the MARCKS family. In terms of assembly, binds to filamentous actin (F-actin), but not to monomeric G-actin, independently of its phosphorylation status. Interacts with calmodulin. Phosphorylated. Phosphorylation at Ser-120 and Thr-183 is non-redundantly catalyzed by MAPK8 in vivo. Phosphorylation at Thr-148 is preferentially catalyzed by MAPK8 in vivo, but this modification can also be catalyzed by other kinases in the absence of MAPK8. May be phosphorylated by protein kinase C, which disrupts the interaction with calmodulin.

It is found in the cytoplasm. The protein resides in the cytoskeleton. The protein localises to the cell membrane. Its function is as follows. Controls cell movement by regulating actin cytoskeleton homeostasis and filopodium and lamellipodium formation. When unphosphorylated, induces cell migration. When phosphorylated by MAPK8, induces actin bundles formation and stabilization, thereby reducing actin plasticity, hence restricting cell movement, including neuronal migration. May be involved in coupling the protein kinase C and calmodulin signal transduction systems. The protein is MARCKS-related protein (Marcksl1) of Rattus norvegicus (Rat).